A 188-amino-acid chain; its full sequence is Anaphase-promoting complex subunit 10 (188 aa).

The region spanning 4 to 187 is the DOC domain; it reads NSNINSNSRL…SPEVSMFQTL (184 aa).

It belongs to the APC10 family. The APC/C is composed of at least 13 subunits that stay tightly associated throughout the cell cycle: anapc1, anapc2, anapc3, anapc4, anapc5, anapc6, anapc7, anapc8, anapc10, anapc11, cdc20, cdc26 and cdh1.

The protein resides in the nucleus. The protein operates within protein modification; protein ubiquitination. Component of the anaphase promoting complex/cyclosome (APC/C), a cell cycle-regulated E3 ubiquitin-protein ligase complex that controls progression through mitosis and the G1 phase of the cell cycle. The sequence is that of Anaphase-promoting complex subunit 10 (anapc10) from Dictyostelium discoideum (Social amoeba).